Consider the following 344-residue polypeptide: Golgi-associated RAB2 interactor protein 1B (344 aa).

Belongs to the GARIN family.

It localises to the golgi apparatus. In terms of biological role, RAB2B effector protein required for accurate acrosome formation and normal male fertility. In complex with RAB2A/RAB2B, seems to suppress excessive vesicle trafficking during acrosome formation. In Rattus norvegicus (Rat), this protein is Golgi-associated RAB2 interactor protein 1B (Garin1b).